A 695-amino-acid polypeptide reads, in one-letter code: Protein-glutamine gamma-glutamyltransferase 2 (695 aa).

Catalysis depends on residues Cys-272, His-332, and Asp-355. Residues Asn-395, Asp-397, Glu-434, Glu-444, and Glu-449 each contribute to the Ca(2+) site. Residues 476–482 (SIKHAQP) and 578–581 (ANIP) each bind GTP.

This sequence belongs to the transglutaminase superfamily. Transglutaminase family. Monomer. The cofactor is Ca(2+).

The protein resides in the cytoplasm. The protein localises to the cytosol. It is found in the nucleus. Its subcellular location is the chromosome. It localises to the secreted. The protein resides in the extracellular space. The protein localises to the extracellular matrix. It is found in the cell membrane. Its subcellular location is the mitochondrion. The catalysed reaction is L-glutaminyl-[protein] + L-lysyl-[protein] = [protein]-L-lysyl-N(6)-5-L-glutamyl-[protein] + NH4(+). It carries out the reaction L-glutaminyl-[protein] + serotonin = 5-serotonyl-L-glutamyl-[protein] + NH4(+). The enzyme catalyses L-glutaminyl-[protein] + dopamine = 5-dopaminyl-L-glutamyl-[protein] + NH4(+). It catalyses the reaction L-glutaminyl-[protein] + histamine = 5-histaminyl-L-glutamyl-[protein] + NH4(+). The catalysed reaction is L-glutaminyl-[protein] + (R)-noradrenaline = 5-(R)-noradrenalinyl-L-glutamyl-[protein] + NH4(+). It carries out the reaction L-glutaminyl-[protein] + H2O = L-glutamyl-[protein] + NH4(+). With respect to regulation, acyltransferase activity is regulated by the binding of GTP and Ca(2+): inactivated by GTP, which stabilizes its closed structure, thereby obstructing the accessibility of substrates to the active sites. In contrast, Ca(2+) acts as a cofactor by inducing conformational change to the active open form. In absence of Ca(2+), Mg(2+) may bind Ca(2+)-binding sites, promoting GTP-binding and subsequent inhibition of the acyltransferase activity. Its function is as follows. Calcium-dependent acyltransferase that catalyzes the formation of covalent bonds between peptide-bound glutamine and various primary amines, such as gamma-amino group of peptide-bound lysine, or mono- and polyamines, thereby producing cross-linked or aminated proteins, respectively. Involved in many biological processes, such as bone development, angiogenesis, wound healing, cellular differentiation, chromatin modification and apoptosis. Acts as a protein-glutamine gamma-glutamyltransferase by mediating the cross-linking of proteins: under physiological conditions, the protein cross-linking activity is inhibited by GTP; inhibition is relieved by Ca(2+) in response to various stresses. When secreted, catalyzes cross-linking of proteins of the extracellular matrix, resulting in the formation of scaffolds. Plays a key role during apoptosis, both by (1) promoting the cross-linking of cytoskeletal proteins resulting in condensation of the cytoplasm, and by (2) mediating cross-linking proteins of the extracellular matrix, resulting in the irreversible formation of scaffolds that stabilize the integrity of the dying cells before their clearance by phagocytosis, thereby preventing the leakage of harmful intracellular components. In addition to protein cross-linking, can use different monoamine substrates to catalyze a vast array of protein post-translational modifications: mediates aminylation of serotonin, dopamine, noradrenaline or histamine into glutamine residues of target proteins to generate protein serotonylation, dopaminylation, noradrenalinylation or histaminylation, respectively. Mediates protein serotonylation of small GTPases during activation and aggregation of platelets, leading to constitutive activation of these GTPases. Plays a key role in chromatin organization by mediating serotonylation and dopaminylation of histone H3. Catalyzes serotonylation of 'Gln-5' of histone H3 (H3Q5ser) during serotonergic neuron differentiation, thereby facilitating transcription. Acts as a mediator of neurotransmission-independent role of nuclear dopamine in ventral tegmental area (VTA) neurons: catalyzes dopaminylation of 'Gln-5' of histone H3 (H3Q5dop), thereby regulating relapse-related transcriptional plasticity in the reward system. Also acts as a protein deamidase by mediating the side chain deamidation of specific glutamine residues of proteins to glutamate. May also act as an isopeptidase cleaving the previously formed cross-links. Also able to participate in signaling pathways independently of its acyltransferase activity: acts as a signal transducer in alpha-1 adrenergic receptor-mediated stimulation of phospholipase C-delta (PLCD) activity and is required for coupling alpha-1 adrenergic agonists to the stimulation of phosphoinositide lipid metabolism. The chain is Protein-glutamine gamma-glutamyltransferase 2 from Pagrus major (Red sea bream).